The chain runs to 267 residues: Strigolactone esterase D14 (267 aa).

Residue Ser97 is the Nucleophile of the active site. Catalysis depends on residues Asp218 and His247.

It belongs to the AB hydrolase superfamily. As to quaternary structure, interacts with SMXL6, SMXL7 and SMXL8. The interaction with SMXLs occurs in the presence of (2'R) stereoisomers of strigolactones, but not (2'S) stereoisomers. Interacts with MAX2. Forms a complex with MAX2 and SKP1A/ASK1 in presence of strigolactone. As to expression, expressed at high levels in rosette and cauline leaves and at lower levels in axillary buds, inflorescences, stems, roots and developing vascular tissue of cotyledons.

It is found in the cytoplasm. The protein resides in the nucleus. Its function is as follows. Involved in strigolactone signaling pathway. Does not move long distances acropetally in the plant to regulate shoot branching and is rapidly degraded in the presence of strigolactones. Functions downstream of strigolactone synthesis, as a component of hormone signaling and as an enzyme that participates in the conversion of strigolactones to the bioactive form. Acts probably as a strigolactone receptor. Strigolactones are hormones that inhibit tillering and shoot branching through the MAX-dependent pathway, contribute to the regulation of shoot architectural response to phosphate-limiting conditions and function as rhizosphere signal that stimulates hyphal branching of arbuscular mycorrhizal fungi and trigger seed germination of root parasitic weeds. Hydrolyzes methyl carlactonoate (MeCLA), but not carlactone (CL) or carlactonoic acid (CLA). Hydrolyzes the butenolide ring of strigolactones. The initial nucleophilic attack causes an electron shift, followed by the addition of a water molecule, to lead to the release of the ABC ring product and the formation of a 'Ser-97'-stabilized open lactone intermediate. Has no esterase activity for 4-nitrophenyl butyrate. Binds and hydrolyzes the synthetic strigolactone analog GR24 in vitro. Forms a stable covalent complex with the D-ring of strigolactone, which is essential for hormone bioactivity. The D-ring is attached to His-247 of the catalytic triad. The hydrolysis of strigolactone into a covalently linked intermediate molecule initiates a conformational change of D14 to facilitate interaction with MAX2 and formation of the D14-MAX2-SKP1/ASK1 complex to trigger strigolactone signaling. This mechanism defines D14 as a non-canonical hormone receptor with dual functions to generate and sense the active form of strigolactone. The protein is Strigolactone esterase D14 of Arabidopsis thaliana (Mouse-ear cress).